Here is a 163-residue protein sequence, read N- to C-terminus: Ribonuclease P protein subunit p25-like protein (163 aa).

2 disordered regions span residues 1–22 and 129–163; these read MEHYRKAGSVELPAPSPMPQLP and NECGYQPPGAPPGLGSMPSSSCGPRSRRRARDTRS. A compositionally biased stretch (low complexity) spans 143 to 152; the sequence is GSMPSSSCGP. A compositionally biased stretch (basic residues) spans 153–163; that stretch reads RSRRRARDTRS.

This sequence belongs to the histone-like Alba family.

The protein localises to the nucleus. In terms of biological role, may be a component of ribonuclease P or MRP. The polypeptide is Ribonuclease P protein subunit p25-like protein (RPP25L) (Homo sapiens (Human)).